The chain runs to 108 residues: Phosphoribosyl-ATP pyrophosphatase (108 aa).

It belongs to the PRA-PH family.

It localises to the cytoplasm. The enzyme catalyses 1-(5-phospho-beta-D-ribosyl)-ATP + H2O = 1-(5-phospho-beta-D-ribosyl)-5'-AMP + diphosphate + H(+). It functions in the pathway amino-acid biosynthesis; L-histidine biosynthesis; L-histidine from 5-phospho-alpha-D-ribose 1-diphosphate: step 2/9. This chain is Phosphoribosyl-ATP pyrophosphatase, found in Pelobacter propionicus (strain DSM 2379 / NBRC 103807 / OttBd1).